Reading from the N-terminus, the 429-residue chain is Fez family zinc finger protein 1 (429 aa).

An Engrailed homology 1 repressor motif is present at residues 29–44 (PLAFSIERIMARTPEP). C2H2-type zinc fingers lie at residues 247–269 (FTCE…MPVH), 275–297 (FVCK…KIIH), 303–325 (HKCN…TRIH), 331–353 (FICE…KLTH), 359–381 (FKCN…MHTH), and 387–410 (FTCP…RKLH). A disordered region spans residues 409–429 (LHDISPGPHSPPTPTGNTEGQ).

Belongs to the krueppel C2H2-type zinc-finger protein family.

It localises to the nucleus. Its function is as follows. Transcription repressor. Involved in the development of the forebrain region. In Danio rerio (Zebrafish), this protein is Fez family zinc finger protein 1 (fezf1).